The primary structure comprises 329 residues: L-lactate dehydrogenase (329 aa).

NAD(+) is bound by residues Val-18, Glu-39, Lys-46, Tyr-71, and 85–86 (GA). Substrate is bound by residues Gln-88 and Arg-94. Residues Ser-107, 124–126 (AAN), and Ser-149 each bind NAD(+). 126-129 (NPVD) is a substrate binding site. 154-157 (DSAR) serves as a coordination point for substrate. Beta-D-fructose 1,6-bisphosphate-binding residues include Arg-159 and His-174. The active-site Proton acceptor is His-181. A Phosphotyrosine modification is found at Tyr-226. A substrate-binding site is contributed by Thr-235.

It belongs to the LDH/MDH superfamily. LDH family. In terms of assembly, homotetramer.

The protein resides in the cytoplasm. The catalysed reaction is (S)-lactate + NAD(+) = pyruvate + NADH + H(+). It functions in the pathway fermentation; pyruvate fermentation to lactate; (S)-lactate from pyruvate: step 1/1. Its activity is regulated as follows. Allosterically activated by fructose 1,6-bisphosphate (FBP). Functionally, catalyzes the conversion of lactate to pyruvate. The sequence is that of L-lactate dehydrogenase from Streptococcus equinus (Streptococcus bovis).